Here is a 180-residue protein sequence, read N- to C-terminus: Crossover junction endodeoxyribonuclease RuvC (180 aa).

Active-site residues include Asp7, Glu66, and Asp138. 3 residues coordinate Mg(2+): Asp7, Glu66, and Asp138.

Belongs to the RuvC family. Homodimer which binds Holliday junction (HJ) DNA. The HJ becomes 2-fold symmetrical on binding to RuvC with unstacked arms; it has a different conformation from HJ DNA in complex with RuvA. In the full resolvosome a probable DNA-RuvA(4)-RuvB(12)-RuvC(2) complex forms which resolves the HJ. Mg(2+) serves as cofactor.

The protein localises to the cytoplasm. The enzyme catalyses Endonucleolytic cleavage at a junction such as a reciprocal single-stranded crossover between two homologous DNA duplexes (Holliday junction).. Functionally, the RuvA-RuvB-RuvC complex processes Holliday junction (HJ) DNA during genetic recombination and DNA repair. Endonuclease that resolves HJ intermediates. Cleaves cruciform DNA by making single-stranded nicks across the HJ at symmetrical positions within the homologous arms, yielding a 5'-phosphate and a 3'-hydroxyl group; requires a central core of homology in the junction. The consensus cleavage sequence is 5'-(A/T)TT(C/G)-3'. Cleavage occurs on the 3'-side of the TT dinucleotide at the point of strand exchange. HJ branch migration catalyzed by RuvA-RuvB allows RuvC to scan DNA until it finds its consensus sequence, where it cleaves and resolves the cruciform DNA. This is Crossover junction endodeoxyribonuclease RuvC from Burkholderia multivorans (strain ATCC 17616 / 249).